The sequence spans 383 residues: Probable transcriptional repressor C1348.12 (383 aa).

Positions 34–60 (CVICRSKKQKCDGQLPCLYCKKYEYQC) form a DNA-binding region, zn(2)-C6 fungal-type.

Its subcellular location is the nucleus. In terms of biological role, probable transcriptional repressor of multidrug resistance genes. This is Probable transcriptional repressor C1348.12 from Schizosaccharomyces pombe (strain 972 / ATCC 24843) (Fission yeast).